Here is a 271-residue protein sequence, read N- to C-terminus: MEHIHDINFQEFSKDPIGTIDRFRWKNEVTPFSNILFPIVCSFGYLALIYGLQIFMKNKKEIKLHGFAMFHNLFLCLLSLLMFLGIVIPMAKYSFPHGLYNIICKPIDSGLVQFSYYIFYLSKVYEFIDTIIQVLRKKSLLFLHVWHHFITLWLVWANLKYDTGCQWVDISANCFVHIVMYFYYFQTERGINPWWKKHITTCQIIQFIVDMSSHLAWHFYDTQGNHNSNYCSGTWATSAFSDFVILSFLGLFIQFFVKAYKKKSSIKKKTN.

7 consecutive transmembrane segments (helical) span residues 35-55 (ILFP…LQIF), 68-88 (AMFH…GIVI), 102-122 (IICK…FYLS), 139-159 (SLLF…WANL), 165-185 (CQWV…FYYF), 198-220 (HITT…WHFY), and 237-257 (TSAF…QFFV).

The protein belongs to the ELO family.

The protein localises to the membrane. It carries out the reaction a very-long-chain acyl-CoA + malonyl-CoA + H(+) = a very-long-chain 3-oxoacyl-CoA + CO2 + CoA. In terms of biological role, fatty acid elongase with strict substrate specificity for monounsaturated fatty acids, in particular 16:1 (delta-9) to produce the unusual 18:1 (delta-11) fatty acid. This is Fatty acid elongase A (eloA) from Dictyostelium discoideum (Social amoeba).